The primary structure comprises 862 residues: MLGWLVIPWNQIFTAACGCFLSDRNYIHMMESNLDALQKTMEELKNGRDDLLGRVSIEEDKGLQRLAQVNGWLSRVQIVESEFKDLLEAMSIETGRLCLLGYCSEDCISSYNYGEKVSKMLEEVKELLSKKDFRMVAQEIIHKVEKKLIQTTVGLDKLVEMAWSSLMNDEIGTLGLYGMGGVGKTTLLESLNNKFVELESEFDVVIWVVVSKDFQFEGIQDQILGRLRSDKEWERETESKKASLIYNNLERKKFVLLLDDLWSEVDMTKIGVPPPTRENGSKIVFTTRSTEVCKHMKADKQIKVACLSPDEAWELFRLTVGDIILRSHQDIPALARIVAAKCHGLPLALNVIGKAMSCKETIQEWSHAINVLNSAGHEFPGMEERILPILKFSYDSLKNGEIKLCFLYCSLFPEDSEIPKEKWIEYWICEGFINPNRYEDGGTNHGYDIIGLLVRAHLLIECELTDNVKMHDVIREMALWINSDFGKQQETICVKSGAHVRMIPNDINWEIVRTMSFTCTQIKKISCRSKCPNLSTLLILDNRLLVKISNRFFRFMPKLVVLDLSANLDLIKLPEEISNLGSLQYLNISLTGIKSLPVGLKKLRKLIYLNLEFTGVHGSLVGIAATLPNLQVLKFFYSCVYVDDILMKELQDLEHLKILTANVKDVTILERIQGDDRLASSIRSLCLEDMSTPRVILSTIALGGLQQLAILMCNISEIRIDWESKERRELSPTEILPSTGSPGFKQLSTVYINQLEGQRDLSWLLYAQNLKKLEVCWSPQIEEIINKEKGMNITKLHRDIVVPFGNLEDLALRQMADLTEICWNYRTLPNLRKSYINDCPKLPEDIFVPLLPEKSPSRFFFF.

Residues Arg24–Lys61 are a coiled coil. The NB-ARC domain occupies Met135 to Tyr438. Residue Gly178 to Thr185 coordinates ATP. LRR repeat units lie at residues Ile511–Pro532, Asn533–Phe555, Lys558–Leu580, and Ser582–Arg604.

Belongs to the disease resistance NB-LRR family.

Functionally, probable disease resistance protein. The protein is Probable disease resistance protein At5g43740 of Arabidopsis thaliana (Mouse-ear cress).